The primary structure comprises 387 residues: S-adenosylmethionine synthase (387 aa).

H16 contacts ATP. D18 is a Mg(2+) binding site. Residue E44 participates in K(+) binding. L-methionine-binding residues include E57 and Q100. The flexible loop stretch occupies residues 100–110 (QSPDIAQGVDR). Residues 167 to 169 (DAK), 232 to 233 (RF), D241, 247 to 248 (RK), A264, and K268 contribute to the ATP site. An L-methionine-binding site is contributed by D241. K272 is an L-methionine binding site.

It belongs to the AdoMet synthase family. In terms of assembly, homotetramer; dimer of dimers. Mg(2+) is required as a cofactor. It depends on K(+) as a cofactor.

The protein localises to the cytoplasm. It catalyses the reaction L-methionine + ATP + H2O = S-adenosyl-L-methionine + phosphate + diphosphate. It functions in the pathway amino-acid biosynthesis; S-adenosyl-L-methionine biosynthesis; S-adenosyl-L-methionine from L-methionine: step 1/1. Catalyzes the formation of S-adenosylmethionine (AdoMet) from methionine and ATP. The overall synthetic reaction is composed of two sequential steps, AdoMet formation and the subsequent tripolyphosphate hydrolysis which occurs prior to release of AdoMet from the enzyme. In Cupriavidus pinatubonensis (strain JMP 134 / LMG 1197) (Cupriavidus necator (strain JMP 134)), this protein is S-adenosylmethionine synthase.